A 317-amino-acid chain; its full sequence is Glycine--tRNA ligase alpha subunit (317 aa).

This sequence belongs to the class-II aminoacyl-tRNA synthetase family. Tetramer of two alpha and two beta subunits.

It is found in the cytoplasm. It catalyses the reaction tRNA(Gly) + glycine + ATP = glycyl-tRNA(Gly) + AMP + diphosphate. In Acidovorax ebreus (strain TPSY) (Diaphorobacter sp. (strain TPSY)), this protein is Glycine--tRNA ligase alpha subunit.